The primary structure comprises 157 residues: AM-toxin biosynthesis protein 15 (157 aa).

The disordered stretch occupies residues 17-43 (RARHWDSKQGSSNSDVASGGSEVAGNS).

The protein operates within mycotoxin biosynthesis. Part of the gene clusters that mediate the biosynthesis of AM-toxins, host-selective toxins (HSTs) causing Alternaria blotch on apple, a worldwide distributed disease. AM-toxins are cyclic depsipeptides containing the 3 residues 2-hydroxy-isovaleric acid (2-HIV), dehydroalanine, L-alanine which are common for all 3 AM-toxins I to III. The fourth precursor is L-alpha-amino-methoxyphenyl-valeric acid (L-Amv) for AM-toxin I, L-alpha-amino-phenyl-valeric acid (L-Apv) for AM-toxin II, and L-alpha-amino-hydroxyphenyl-valeric acid (L-Ahv) for AM-toxin III. AM-toxins have two target sites for affecting susceptible apple cells; they cause invagination of the plasma membrane and electrolyte loss and chloroplast disorganization. The non-ribosomal peptide synthetase AMT1 contains 4 catalytic modules and is responsible for activation of each residue in AM-toxin. The aldo-keto reductase AMT2 catalyzes the conversion of 2-keto-isovaleric acid (2-KIV) to 2-hydroxy-isovaleric acid (2-HIV), one of the precursor residues incorporated by AMT1 during AM-toxin biosynthesis, by reduction of its ketone to an alcohol. The cytochrome P450 monooxygenase AMT3 and the thioesterase AMT4 are also important for AM-toxin production, but their exact function within the AM-toxin biosynthesis are not known yet. Up to 21 proteins (including AMT1 to AMT4) are predicted to be involved in AM-toxin biosynthesis since their expression ishighly up-regulated in AM-toxin-producing cultures. This Alternaria alternata (Alternaria rot fungus) protein is AM-toxin biosynthesis protein 15.